A 144-amino-acid chain; its full sequence is Small ribosomal subunit protein uS11c (144 aa).

This sequence belongs to the universal ribosomal protein uS11 family. Part of the 30S ribosomal subunit.

It localises to the plastid. The protein resides in the chloroplast. This Oenothera biennis (German evening primrose) protein is Small ribosomal subunit protein uS11c.